The following is a 427-amino-acid chain: O-methyltransferase sol2 (427 aa).

Position 281 (Asp281) interacts with S-adenosyl-L-methionine. His327 serves as the catalytic Proton acceptor.

The protein belongs to the class I-like SAM-binding methyltransferase superfamily. Cation-independent O-methyltransferase family. COMT subfamily.

The protein operates within phytotoxin biosynthesis. In terms of biological role, O-methyltransferase; part of the gene cluster that mediates the biosynthesis of the phytotoxin solanapyrone, a causal agent of early blight disease of potato and tomato. The prosolanapyrone synthase sol1 is a polyketide synthase that produces the octaketide desmethylprosolanapyrone I via sequential condensations of 7 malonyl-CoA units with one acetyl-CoA unit, and one methylation step. The octaketide backbone is further methylated by the sol2 O-methyltransferase to yield prosolanapyrone I. Prosolanapyrone I is hydroxylated to prosolanapyrone II by the cytochrome P450 monooxygenase sol6. The solanapyrone synthase sol5 then catalyzes the oxidation of prosolanapyrone II and the subsequent Diels Alder cycloisomerization of the product prosolanapyrone III to solanapyrones A and D. Solanapyrones A and D are then converted into solanapyrones B and E, respectively, by the sol3 dehydrogenase. The chain is O-methyltransferase sol2 (sol2) from Alternaria solani.